A 309-amino-acid chain; its full sequence is Zinc transporter ZIP2 (309 aa).

Topologically, residues 1-8 (MEVLLGVK) are extracellular. The helical transmembrane segment at 9–29 (IGCLLALLVLTLGCGLTPIYV) threads the bilayer. The Cytoplasmic portion of the chain corresponds to 30-43 (KWFQMDAATGHHHR). A helical transmembrane segment spans residues 44-64 (VLSLLGCTSAGVFLGAGLMHM). Residues 65–103 (TAEALEGIESEIQKFVEQNSTGSKGNSSRDAASSYVEYP) lie on the Extracellular side of the membrane. Residues 104 to 124 (YGELVISLGFFFVFLLESLAL) form a helical membrane-spanning segment. Residues 125-164 (QCCHGAAGGSTVQEEEWGGTHAFGFHKHPAVPSPSRGPLR) lie on the Cytoplasmic side of the membrane. A helical membrane pass occupies residues 165–185 (ALVLLLSLSFHSVFEGLAVGL). H175 and E179 together coordinate Zn(2+). At 186 to 191 (QATVAA) the chain is on the extracellular side. A helical membrane pass occupies residues 192-212 (TIQLCVAVLAHKGLVVFSVGL). H202 is a binding site for Zn(2+). Topologically, residues 213-225 (RLGKIGTGPRWAT) are cytoplasmic. Residues 226–246 (FCILSLALMSPVGLALGLTVA) form a helical membrane-spanning segment. Over 247–258 (GGASGQTQGLAQ) the chain is Extracellular. The chain crosses the membrane as a helical span at residues 259 to 279 (AVLEGIAAGTFLYVTFLEILP). E276 is a binding site for Zn(2+). The Cytoplasmic segment spans residues 280–288 (RELACPEAP). Residues 289–309 (LAKYSCVAAGFAFMALIALWA) form a helical membrane-spanning segment.

Belongs to the ZIP transporter (TC 2.A.5) family. As to expression, high expression in the liver, skin and ovary.

The protein localises to the cell membrane. It catalyses the reaction Zn(2+)(in) = Zn(2+)(out). The catalysed reaction is Cd(2+)(in) = Cd(2+)(out). Its function is as follows. Transporter for the divalent cation Zn(2+). Mediates the influx of Zn(2+) into cells from extracellular space. The Zn(2+) uniporter activity is independent of H(+)-driving force, but is modulated by extracellular pH and membrane potential. Transports also other divalent cations Zn(2+), Cd2(+), Cu2(+), Co2(+) in the order of decreasing affinity, respectively. In the skin, aids in the differentiation of keratinocytes in the epidermis. The polypeptide is Zinc transporter ZIP2 (Slc39a2) (Mus musculus (Mouse)).